Reading from the N-terminus, the 157-residue chain is UPF0178 protein BH1374 (157 aa).

This sequence belongs to the UPF0178 family.

The chain is UPF0178 protein BH1374 from Halalkalibacterium halodurans (strain ATCC BAA-125 / DSM 18197 / FERM 7344 / JCM 9153 / C-125) (Bacillus halodurans).